Here is a 356-residue protein sequence, read N- to C-terminus: MFS-type transporter tazK (356 aa).

9 helical membrane-spanning segments follow: residues 12–32, 42–62, 69–89, 102–122, 178–198, 211–231, 257–277, 288–308, and 320–340; these read LPFF…ALGH, FLGG…LADF, GVAV…GAIT, MTAW…FIIL, ILLS…LLFV, GAID…VGAF, LHPM…FAWT, ILAG…SLAY, and AISG…LFAP.

It belongs to the major facilitator superfamily. CAR1 family.

The protein resides in the membrane. Its function is as follows. MFS-type transporter; part of the gene cluster that mediates the biosynthesis of azaterrilone A and other azaphilones, a class of fungal metabolites characterized by a highly oxygenated pyrano-quinone bicyclic core and exhibiting a broad range of bioactivities. In Aspergillus terreus (strain NIH 2624 / FGSC A1156), this protein is MFS-type transporter tazK.